We begin with the raw amino-acid sequence, 142 residues long: Large ribosomal subunit protein uL13 (142 aa).

It belongs to the universal ribosomal protein uL13 family. As to quaternary structure, part of the 50S ribosomal subunit.

Functionally, this protein is one of the early assembly proteins of the 50S ribosomal subunit, although it is not seen to bind rRNA by itself. It is important during the early stages of 50S assembly. This is Large ribosomal subunit protein uL13 from Citrobacter koseri (strain ATCC BAA-895 / CDC 4225-83 / SGSC4696).